The following is a 410-amino-acid chain: MRYLLSAPSQIKATIQLPASKSISNRALIIHALSKGDDVLSNLSDCDDTQVMIKALTEGNEVIDILAAGTAMRFLTAYLSSTPGIHTITGTERMQQRPIQILVNALRELGAHIEYVRNEGFPPLRIEGRELTGSEITLKGNVSSQYISALLMIGPVLKNGLQLRLTGEIVSRPYINLTLQLMKDFGASASWTSDQSILVDPQPYHCLPFTVESDWSAASYWYQIAALSPQANIELTGLFRHSYQGDSRGAEVFARLGVATEYTETGIRLKKNGTCVERLDEDFVDIPDLAQTFVVTCALLNVPFRFTGLQSLKIKETDRIEALKTEMKKLGYILHDKNDSILSWDGERVEQQACPVIKTYEDHRMAMAFAPAAIHYPTIQIDEPQVVSKSYPGYWNDLRKAGFGIKVGEE.

Residues Lys-21, Ser-22, and Arg-26 each coordinate 3-phosphoshikimate. Lys-21 contributes to the phosphoenolpyruvate binding site. Phosphoenolpyruvate contacts are provided by Gly-69 and Arg-97. The 3-phosphoshikimate site is built by Ser-143, Ser-144, Gln-145, Ser-171, Asp-288, and Lys-315. Phosphoenolpyruvate is bound at residue Gln-145. The active-site Proton acceptor is the Asp-288. Positions 319, 364, and 389 each coordinate phosphoenolpyruvate.

The protein belongs to the EPSP synthase family. Monomer.

Its subcellular location is the cytoplasm. The catalysed reaction is 3-phosphoshikimate + phosphoenolpyruvate = 5-O-(1-carboxyvinyl)-3-phosphoshikimate + phosphate. Its pathway is metabolic intermediate biosynthesis; chorismate biosynthesis; chorismate from D-erythrose 4-phosphate and phosphoenolpyruvate: step 6/7. In terms of biological role, catalyzes the transfer of the enolpyruvyl moiety of phosphoenolpyruvate (PEP) to the 5-hydroxyl of shikimate-3-phosphate (S3P) to produce enolpyruvyl shikimate-3-phosphate and inorganic phosphate. The polypeptide is 3-phosphoshikimate 1-carboxyvinyltransferase (Bacteroides fragilis (strain YCH46)).